Consider the following 456-residue polypeptide: Zinc finger C2HC domain-containing protein 1C (456 aa).

Disordered stretches follow at residues 16–46 (MLPH…QSLK) and 85–113 (YPHC…SSGP). Polar residues-rich tracts occupy residues 35-46 (YEQGDSSQQSLK) and 90-102 (GISQ…DSQG). Residues 211 to 265 (VQIRRLEAAGESLEEEIRRKQILLRGKLKKTEEELRRIQTQKEQAKENENGELQK) adopt a coiled-coil conformation. Residues 336 to 388 (NKIRDPVSEPSVEKFSPPSETPVGALQGSARNSSLSMAPDSSGSSGSIEEPQL) are disordered. The span at 368 to 382 (SSLSMAPDSSGSSGS) shows a compositional bias: low complexity. The segment at 387–416 (QLGECSHCGRKFLSFRLERHSNICSRMRGS) adopts a C2HC/C3H-type zinc-finger fold. 4 residues coordinate Zn(2+): C391, C394, H406, and C410.

The protein belongs to the ZC2HC1 family. It depends on Zn(2+) as a cofactor.

The polypeptide is Zinc finger C2HC domain-containing protein 1C (ZC2HC1C) (Homo sapiens (Human)).